We begin with the raw amino-acid sequence, 966 residues long: Probable LIM domain-containing serine/threonine-protein kinase DDB_G0286997 (966 aa).

2 LIM zinc-binding domains span residues 3–62 (SRCG…LNAP) and 63–120 (KCFK…KPPP). Disordered stretches follow at residues 208 to 291 (YSLS…PTED) and 331 to 588 (PLNQ…EQQV). Low complexity predominate over residues 211 to 231 (SSPSSSSSSSSSSSSSSSSPP). Polar residues predominate over residues 232 to 269 (NTFNKSSDFLRNPLNNNVKSSSSSIGGNFVNKSQQQQQ). Low complexity-rich tracts occupy residues 270–284 (PIDSCSKSSISISPS) and 331–350 (PLNQQPQQQQQQFKPQSPNL). Over residues 374–389 (TTTFSNPLLKTKNQSF) the composition is skewed to polar residues. Pro residues predominate over residues 419 to 430 (PLPPPPITPIPS). The segment covering 431–449 (PSSSSIIINNQQQQQQESQ) has biased composition (low complexity). Pro residues predominate over residues 490 to 511 (KPIVLPPPPLDMEQLPLPPPPL). The segment covering 513 to 526 (SSQINQSLKSTQHN) has biased composition (polar residues). Residues 543–560 (IQKQSIPTRKPQLPQSSN) show a composition bias toward low complexity. A compositionally biased stretch (pro residues) spans 561 to 570 (PSPPSPPSPQ). A Protein kinase domain is found at 702–959 (VIFGDVIAAG…DTLKKISESL (258 aa)). ATP-binding positions include 708 to 716 (IAAGASGKV) and K729. D825 (proton acceptor) is an active-site residue.

The protein belongs to the protein kinase superfamily. TKL Ser/Thr protein kinase family.

The enzyme catalyses L-seryl-[protein] + ATP = O-phospho-L-seryl-[protein] + ADP + H(+). The catalysed reaction is L-threonyl-[protein] + ATP = O-phospho-L-threonyl-[protein] + ADP + H(+). The chain is Probable LIM domain-containing serine/threonine-protein kinase DDB_G0286997 from Dictyostelium discoideum (Social amoeba).